We begin with the raw amino-acid sequence, 189 residues long: uncharacterized protein (189 aa).

The HTH tetR-type domain maps to arginine 2–arginine 62. The H-T-H motif DNA-binding region spans threonine 25–phenylalanine 44.

This is an uncharacterized protein from Bacillus subtilis (strain 168).